The primary structure comprises 90 residues: UPF0335 protein Smed_2680 (90 aa).

This sequence belongs to the UPF0335 family.

The sequence is that of UPF0335 protein Smed_2680 from Sinorhizobium medicae (strain WSM419) (Ensifer medicae).